The sequence spans 310 residues: tRNA uridine(34) hydroxylase (310 aa).

The 99-residue stretch at 127–225 folds into the Rhodanese domain; that stretch reads KNQNTIVIDT…YLDEISKEEN (99 aa). Catalysis depends on cysteine 185, which acts as the Cysteine persulfide intermediate.

Belongs to the TrhO family.

It catalyses the reaction uridine(34) in tRNA + AH2 + O2 = 5-hydroxyuridine(34) in tRNA + A + H2O. Catalyzes oxygen-dependent 5-hydroxyuridine (ho5U) modification at position 34 in tRNAs. This chain is tRNA uridine(34) hydroxylase, found in Prochlorococcus marinus (strain MIT 9215).